A 286-amino-acid polypeptide reads, in one-letter code: Diaminopimelate epimerase (286 aa).

The substrate site is built by Asn13 and Asn66. Cys75 functions as the Proton donor in the catalytic mechanism. Substrate-binding positions include 76–77 (GN), Asn165, Asn198, and 216–217 (ER). Cys225 acts as the Proton acceptor in catalysis. 226–227 (GT) contributes to the substrate binding site.

It belongs to the diaminopimelate epimerase family. As to quaternary structure, homodimer.

It is found in the cytoplasm. The enzyme catalyses (2S,6S)-2,6-diaminopimelate = meso-2,6-diaminopimelate. It participates in amino-acid biosynthesis; L-lysine biosynthesis via DAP pathway; DL-2,6-diaminopimelate from LL-2,6-diaminopimelate: step 1/1. Catalyzes the stereoinversion of LL-2,6-diaminopimelate (L,L-DAP) to meso-diaminopimelate (meso-DAP), a precursor of L-lysine and an essential component of the bacterial peptidoglycan. The polypeptide is Diaminopimelate epimerase (Thermosynechococcus vestitus (strain NIES-2133 / IAM M-273 / BP-1)).